The primary structure comprises 285 residues: Phosphatidylserine decarboxylase proenzyme (285 aa).

Residues aspartate 89, histidine 146, and serine 252 each act as charge relay system; for autoendoproteolytic cleavage activity in the active site. Residue serine 252 is the Schiff-base intermediate with substrate; via pyruvic acid; for decarboxylase activity of the active site. Serine 252 is subject to Pyruvic acid (Ser); by autocatalysis.

The protein belongs to the phosphatidylserine decarboxylase family. PSD-B subfamily. Prokaryotic type I sub-subfamily. In terms of assembly, heterodimer of a large membrane-associated beta subunit and a small pyruvoyl-containing alpha subunit. Requires pyruvate as cofactor. Post-translationally, is synthesized initially as an inactive proenzyme. Formation of the active enzyme involves a self-maturation process in which the active site pyruvoyl group is generated from an internal serine residue via an autocatalytic post-translational modification. Two non-identical subunits are generated from the proenzyme in this reaction, and the pyruvate is formed at the N-terminus of the alpha chain, which is derived from the carboxyl end of the proenzyme. The autoendoproteolytic cleavage occurs by a canonical serine protease mechanism, in which the side chain hydroxyl group of the serine supplies its oxygen atom to form the C-terminus of the beta chain, while the remainder of the serine residue undergoes an oxidative deamination to produce ammonia and the pyruvoyl prosthetic group on the alpha chain. During this reaction, the Ser that is part of the protease active site of the proenzyme becomes the pyruvoyl prosthetic group, which constitutes an essential element of the active site of the mature decarboxylase.

Its subcellular location is the cell membrane. It catalyses the reaction a 1,2-diacyl-sn-glycero-3-phospho-L-serine + H(+) = a 1,2-diacyl-sn-glycero-3-phosphoethanolamine + CO2. The protein operates within phospholipid metabolism; phosphatidylethanolamine biosynthesis; phosphatidylethanolamine from CDP-diacylglycerol: step 2/2. In terms of biological role, catalyzes the formation of phosphatidylethanolamine (PtdEtn) from phosphatidylserine (PtdSer). This chain is Phosphatidylserine decarboxylase proenzyme, found in Vibrio cholerae serotype O1 (strain ATCC 39541 / Classical Ogawa 395 / O395).